The primary structure comprises 193 residues: MRGRDEDTGEFRGASRSQQRREALEIFDLGEKLVALTPAQLAKLPVPESLIPHIEESKRITSHIAHKRQLAFLAKHMRREDDETLDAIRDALDANSDTARREVAAIHRVERWRERLLAEGDVALAELLEAYPAADRQQLRQLVRNAIHERAKNKPPRAYRELFQVLRDLSQKPGLESGDAGLEDEESASENDE.

A compositionally biased stretch (basic and acidic residues) spans 1–10; sequence MRGRDEDTGE. Disordered regions lie at residues 1–20 and 170–193; these read MRGR…SQQR and SQKP…ENDE. The segment covering 181–193 has biased composition (acidic residues); the sequence is GLEDEESASENDE.

The protein belongs to the DarP family.

It is found in the cytoplasm. Its function is as follows. Member of a network of 50S ribosomal subunit biogenesis factors which assembles along the 30S-50S interface, preventing incorrect 23S rRNA structures from forming. Promotes peptidyl transferase center (PTC) maturation. The sequence is that of Dual-action ribosomal maturation protein DarP from Xanthomonas campestris pv. campestris (strain 8004).